The sequence spans 193 residues: Ion-translocating oxidoreductase complex subunit A (193 aa).

The next 6 helical transmembrane spans lie at L5–L25, M39–V59, F62–A82, L102–L122, A134–I154, and S171–V191.

This sequence belongs to the NqrDE/RnfAE family. In terms of assembly, the complex is composed of six subunits: RnfA, RnfB, RnfC, RnfD, RnfE and RnfG.

The protein localises to the cell inner membrane. Its function is as follows. Part of a membrane-bound complex that couples electron transfer with translocation of ions across the membrane. In Edwardsiella ictaluri (strain 93-146), this protein is Ion-translocating oxidoreductase complex subunit A.